Reading from the N-terminus, the 440-residue chain is MFLAQEIIRKKRDGHALSDEEIRFFINGIRDNTISEGQIAALAMTIFFHDMSIPERVSLTMAMRDSGSVLDWKSLNLNGPIVDKHSTGGVGDVTSLMLGPMVAACGGYIPMISGRGLGHTGGTLDKLEAIPGFDIFPNDTRFREIIKDVGVAIIGQTSSLAPADKRFYATRDITATVDSIPLITASILAKKLAEGLDALVMDVKVGSGAFMPTFELSAALAEAIVGVSNGAGVRTTALLTDMNQVLASSAGNAVEVREAVQFLTGEYRNPRLFDVTMALCVEMLISGKLAKDDAEARAKLQAVLDNGKAAEIFGRMVAAQKGPNDFVENYAKYLPTAMLSKAVYADTEGFVSAMDTRALGMAVVSMGGGRRQASDTIDYSVGFTDMARLGDSVDGQRPLAVIHAKDENSWQEAAKAVKAAIQLDDKAPETTPTVYRRITD.

This sequence belongs to the thymidine/pyrimidine-nucleoside phosphorylase family. As to quaternary structure, homodimer.

It carries out the reaction thymidine + phosphate = 2-deoxy-alpha-D-ribose 1-phosphate + thymine. The protein operates within pyrimidine metabolism; dTMP biosynthesis via salvage pathway; dTMP from thymine: step 1/2. In terms of biological role, the enzymes which catalyze the reversible phosphorolysis of pyrimidine nucleosides are involved in the degradation of these compounds and in their utilization as carbon and energy sources, or in the rescue of pyrimidine bases for nucleotide synthesis. This is Thymidine phosphorylase from Enterobacter sp. (strain 638).